A 514-amino-acid polypeptide reads, in one-letter code: Tryptophan decarboxylase 1 (514 aa).

A serotonin-binding site is contributed by Phe-104. Residues Thr-175 and Ser-176 each contribute to the pyridoxal 5'-phosphate site. His-214 is a binding site for serotonin. Position 273 (Thr-273) interacts with pyridoxal 5'-phosphate. Position 330 is an N6-(pyridoxal phosphate)lysine (Lys-330). Tyr-359 serves as the catalytic Proton donor. Val-380 and Gly-381 together coordinate pyridoxal 5'-phosphate.

It belongs to the group II decarboxylase family. In terms of assembly, forms homodimers. Pyridoxal 5'-phosphate serves as cofactor.

It carries out the reaction L-tryptophan + H(+) = tryptamine + CO2. It catalyses the reaction 5-hydroxy-L-tryptophan + H(+) = serotonin + CO2. Functionally, involved in serotonin biosynthesis. Catalyzes the decarboxylation of L-tryptophan to produce tryptamine, which is converted to serotonin by tryptamine 5-hydroxylase. May play a major role in serotonin biosynthesis during senescence. Accumulation of serotonin attenuates leaf senescence. Catalyzes the decarboxylation of 5-hydroxy-L-tryptophan to produce serotonin. This Oryza sativa subsp. japonica (Rice) protein is Tryptophan decarboxylase 1.